A 68-amino-acid chain; its full sequence is Riparin-1.5 amide (68 aa).

Residues 1-15 form the signal peptide; the sequence is MKIIVVLAVLMLVSA. The propeptide occupies 16–41; that stretch reads QVCLVSAAEMGHSSDNELSSRDLVKR. An intrachain disulfide couples cysteine 47 to cysteine 53. Cysteine 53 carries the post-translational modification Cysteine amide. The propeptide occupies 57 to 68; it reads SIESSEGANGGE.

In terms of tissue distribution, expressed by the skin glands.

It localises to the secreted. The chain is Riparin-1.5 amide from Crinia riparia (Streambank froglet).